Here is a 109-residue protein sequence, read N- to C-terminus: MGMKIIAGDDVIVISGKDKGKMGKVIKVLKKKHCGKDVSFAIVSGVNVCRKSVKATQKSDGGIISVEKPINLSNIALFDSTLGIQTRVGYKFIGEKKVRFMKSSGKVIE.

It belongs to the universal ribosomal protein uL24 family. Part of the 50S ribosomal subunit.

In terms of biological role, one of two assembly initiator proteins, it binds directly to the 5'-end of the 23S rRNA, where it nucleates assembly of the 50S subunit. Functionally, one of the proteins that surrounds the polypeptide exit tunnel on the outside of the subunit. This is Large ribosomal subunit protein uL24 from Ehrlichia chaffeensis (strain ATCC CRL-10679 / Arkansas).